Here is a 286-residue protein sequence, read N- to C-terminus: Small ribosomal subunit protein uS2 (286 aa).

Residues 231 to 286 (ERAQAEAKAAAGDNDAPVSSEGESTEVASDAASTASETTATSSDESAAESSEAESK) form a disordered region. A compositionally biased stretch (low complexity) spans 255-280 (TEVASDAASTASETTATSSDESAAES).

It belongs to the universal ribosomal protein uS2 family.

The sequence is that of Small ribosomal subunit protein uS2 from Corynebacterium kroppenstedtii (strain DSM 44385 / JCM 11950 / CIP 105744 / CCUG 35717).